Reading from the N-terminus, the 404-residue chain is RNA exonuclease 3 (404 aa).

A compositionally biased stretch (polar residues) spans 1–17 (MNNNAQNKRSLDDSNGN). Positions 1-29 (MNNNAQNKRSLDDSNGNDTKRPKQEDPKY) are disordered. The span at 18–28 (DTKRPKQEDPK) shows a compositional bias: basic and acidic residues. The Exonuclease domain occupies 241-389 (VLGIDCEMGF…EDSIAAIDIV (149 aa)).

This sequence belongs to the REXO1/REXO3 family.

It localises to the cytoplasm. The protein resides in the nucleus. Functionally, 3' to 5' exoribonuclease required for proper 3' end maturation of MRP RNA and of the U5L snRNA. This Candida albicans (strain SC5314 / ATCC MYA-2876) (Yeast) protein is RNA exonuclease 3 (REX3).